A 732-amino-acid polypeptide reads, in one-letter code: 1,4-alpha-glucan branching enzyme GlgB (732 aa).

The active-site Nucleophile is the Asp-412. Glu-465 serves as the catalytic Proton donor.

It belongs to the glycosyl hydrolase 13 family. GlgB subfamily. As to quaternary structure, monomer.

It carries out the reaction Transfers a segment of a (1-&gt;4)-alpha-D-glucan chain to a primary hydroxy group in a similar glucan chain.. It functions in the pathway glycan biosynthesis; glycogen biosynthesis. In terms of biological role, catalyzes the formation of the alpha-1,6-glucosidic linkages in glycogen by scission of a 1,4-alpha-linked oligosaccharide from growing alpha-1,4-glucan chains and the subsequent attachment of the oligosaccharide to the alpha-1,6 position. In Pseudomonas aeruginosa (strain ATCC 15692 / DSM 22644 / CIP 104116 / JCM 14847 / LMG 12228 / 1C / PRS 101 / PAO1), this protein is 1,4-alpha-glucan branching enzyme GlgB.